Consider the following 250-residue polypeptide: DNA repair protein RecO (250 aa).

Belongs to the RecO family.

Its function is as follows. Involved in DNA repair and RecF pathway recombination. The protein is DNA repair protein RecO of Syntrophomonas wolfei subsp. wolfei (strain DSM 2245B / Goettingen).